The sequence spans 188 residues: Elongation factor P (188 aa).

This sequence belongs to the elongation factor P family.

The protein resides in the cytoplasm. Its pathway is protein biosynthesis; polypeptide chain elongation. Functionally, involved in peptide bond synthesis. Stimulates efficient translation and peptide-bond synthesis on native or reconstituted 70S ribosomes in vitro. Probably functions indirectly by altering the affinity of the ribosome for aminoacyl-tRNA, thus increasing their reactivity as acceptors for peptidyl transferase. In Caulobacter sp. (strain K31), this protein is Elongation factor P.